Consider the following 438-residue polypeptide: Trigger factor (438 aa).

In terms of domain architecture, PPIase FKBP-type spans 163–249 (EDFVLIDYEG…LKEIRKQILP (87 aa)).

Belongs to the FKBP-type PPIase family. Tig subfamily.

It localises to the cytoplasm. It carries out the reaction [protein]-peptidylproline (omega=180) = [protein]-peptidylproline (omega=0). Involved in protein export. Acts as a chaperone by maintaining the newly synthesized protein in an open conformation. Functions as a peptidyl-prolyl cis-trans isomerase. This Desulfatibacillum aliphaticivorans protein is Trigger factor.